The primary structure comprises 178 residues: Fluoride-specific ion channel FluC 2 (178 aa).

Helical transmembrane passes span 25–45 (PDIH…GTAI), 63–83 (FVAN…LAGA), 97–117 (GLGM…LEGF), and 129–149 (IAYL…GVWA). Na(+)-binding residues include Gly104 and Ser107.

The protein belongs to the fluoride channel Fluc/FEX (TC 1.A.43) family.

The protein resides in the cell membrane. The catalysed reaction is fluoride(in) = fluoride(out). With respect to regulation, na(+) is not transported, but it plays an essential structural role and its presence is essential for fluoride channel function. Functionally, fluoride-specific ion channel. Important for reducing fluoride concentration in the cell, thus reducing its toxicity. The polypeptide is Fluoride-specific ion channel FluC 2 (Bifidobacterium longum (strain NCC 2705)).